A 1960-amino-acid polypeptide reads, in one-letter code: Zinc finger protein 638 (1960 aa).

Positions 1–137 are disordered; it reads MSRPRFNPRG…SPKVQSRYTK (137 aa). The span at 19–31 shows a compositional bias: pro residues; the sequence is APNPPGMRPPGPF. An asymmetric dimethylarginine mark is found at Arg-47, Arg-49, and Arg-54. Residues 60–75 show a composition bias toward polar residues; it reads SYQNMGPQRMNVQVTQ. Residues 76–89 are compositionally biased toward basic and acidic residues; sequence HRTDPRLTKEKLDF. Over residues 117 to 137 the composition is skewed to polar residues; it reads KQSSVTQVTEQSPKVQSRYTK. Ser-128 and Ser-288 each carry phosphoserine. A Glycyl lysine isopeptide (Lys-Gly) (interchain with G-Cter in SUMO2) cross-link involves residue Lys-291. Phosphoserine is present on residues Ser-298, Ser-367, Ser-381, and Ser-418. The segment at 352–373 is disordered; sequence KSVISSADAHGGPTESKKDYQS. Disordered stretches follow at residues 463-673, 749-804, and 827-899; these read NPEI…QSLS, PGKK…STVK, and KASI…KESE. Positions 468-483 are enriched in basic and acidic residues; that stretch reads PSRRNESNRKENETPR. The tract at residues 470–573 is involved in localization to nuclear speckles; it reads RRNESNRKEN…ERTSRKSVRS (104 aa). Residues 484–556 are compositionally biased toward basic residues; sequence RRSHSPSPRH…SRNLLRRSPK (73 aa). A Phosphoserine modification is found at Ser-554. Basic and acidic residues-rich tracts occupy residues 565–583 and 591–602; these read RTSR…EDGG and EVTKQKHTETVD. Residues Ser-606 and Ser-615 each carry the phosphoserine modification. The span at 618-628 shows a compositional bias: low complexity; the sequence is KPSAKSLSSVK. A Phosphoserine modification is found at Ser-637. In terms of domain architecture, RRM 1 spans 676-751; it reads SILLVSELPE…KSVKVCVPGK (76 aa). Positions 755–782 are enriched in basic and acidic residues; it reads QNKEMKKKPSDIKKSSASALKKETDASK. A Glycyl lysine isopeptide (Lys-Gly) (interchain with G-Cter in SUMO2) cross-link involves residue Lys-775. Low complexity predominate over residues 783–802; sequence TMETVSSSSSAKSGQIKSST. 3 stretches are compositionally biased toward basic and acidic residues: residues 838–854, 867–879, and 888–899; these read KSLE…KDSN, ASSE…KSAE, and ATEKEPVNKESE. The region spanning 902-976 is the RRM 2 domain; that stretch reads SVVFISNLPN…NQLSISMAPE (75 aa). Over residues 1082–1092 the composition is skewed to basic and acidic residues; it reads SEVQRKNDLEL. 5 disordered regions span residues 1082–1151, 1396–1420, 1442–1462, 1484–1527, and 1550–1583; these read SEVQ…EEPK, TVVS…PKPV, TRSG…GVNR, TKQS…KSKE, and PSQA…KGKT. Ser-1099 is modified (phosphoserine). Basic and acidic residues predominate over residues 1140–1151; sequence VHQEELGKEEPK. A compositionally biased stretch (low complexity) spans 1399–1409; that stretch reads SSPKAKSTPSK. Position 1400 is a phosphoserine (Ser-1400). Residues 1442–1459 show a composition bias toward polar residues; the sequence is TRSGLAESNSKSKPTQIG. Composition is skewed to basic and acidic residues over residues 1484 to 1503 and 1518 to 1527; these read TKQS…DDSN and TTDRSSKSKE. Phosphoserine is present on residues Ser-1635 and Ser-1661. Disordered regions lie at residues 1763-1898 and 1930-1960; these read EVGD…SDVP and KSTR…RSSR. Positions 1772–1790 are enriched in basic and acidic residues; sequence NDSKVELARGKIEHHTDKK. Lys-1804 participates in a covalent cross-link: Glycyl lysine isopeptide (Lys-Gly) (interchain with G-Cter in SUMO2). Positions 1806–1818 are enriched in polar residues; that stretch reads DSFSQVGPGSETV. Residues 1819-1831 are compositionally biased toward basic and acidic residues; sequence TQKDLKTMPERHL. Ser-1864 carries the post-translational modification Phosphoserine. The segment covering 1870 to 1885 has biased composition (basic and acidic residues); that stretch reads AELKDSEPDEKRRKTQ. The segment at 1876 to 1906 adopts a Matrin-type zinc-finger fold; that stretch reads EPDEKRRKTQDSSVGKSMTSDVPGDLDFLVP. Polar residues predominate over residues 1886-1895; the sequence is DSSVGKSMTS. A compositionally biased stretch (basic and acidic residues) spans 1936–1960; the sequence is QNTEKFMAKQRKEKEQNETEERSSR.

In terms of assembly, interacts with FHL2. Interacts with CEBPA, CEBPD and CEBPG. Interacts with MPHOSPH8 and TASOR components of the HUSH complex; leading to recruitment of the HUSH complex. Interacts with SETDB1. Interacts with HDAC1. Interacts with HDAC4.

The protein resides in the nucleus speckle. Functionally, transcription factor that binds to cytidine clusters in double-stranded DNA. Plays a key role in the silencing of unintegrated retroviral DNA: some part of the retroviral DNA formed immediately after infection remains unintegrated in the host genome and is transcriptionally repressed. Mediates transcriptional repression of unintegrated viral DNA by specifically binding to the cytidine clusters of retroviral DNA and mediating the recruitment of chromatin silencers, such as the HUSH complex, SETDB1 and the histone deacetylases HDAC1 and HDAC4. Acts as an early regulator of adipogenesis by acting as a transcription cofactor of CEBPs (CEBPA, CEBPD and/or CEBPG), controlling the expression of PPARG and probably of other proadipogenic genes, such as SREBF1. May also regulate alternative splicing of target genes during adipogenesis. This is Zinc finger protein 638 from Mus musculus (Mouse).